The chain runs to 296 residues: L-fucono-1,5-lactonase (296 aa).

It belongs to the metallo-dependent hydrolases superfamily. As to quaternary structure, monomer. It depends on Does not require a divalent metal for activity. The purified enzyme contains Zn(2+), but the addition of chelators does not diminish the catalytic activity of the enzyme, indicating that it does not require a divalent cation for substrate turnover. as a cofactor.

It carries out the reaction L-fucono-1,5-lactone + H2O = L-fuconate + H(+). The enzyme catalyses L-fucono-1,4-lactone + H2O = L-fuconate + H(+). The catalysed reaction is D-arabinono-1,4-lactone + H2O = D-arabinonate + H(+). It catalyses the reaction L-xylono-1,4-lactone + H2O = L-xylonate + H(+). It carries out the reaction L-galactono-1,4-lactone + H2O = L-galactonate + H(+). The protein operates within carbohydrate degradation; L-fucose degradation. Its function is as follows. L-fucono-1,5-lactonase involved in an L-fucose degradation pathway. Catalyzes the hydrolysis of L-fucono-1,5-lactone to L-fuconate. L-fucono-1,5-lactone is the best substrate, but the enzyme can also hydrolyze L-fucono-1,4-lactone, L-galactono-1,4-lactone D-arabinono-1,4-lactone and L-xylono-1,4-lactone. The polypeptide is L-fucono-1,5-lactonase (Burkholderia multivorans (strain ATCC 17616 / 249)).